A 966-amino-acid polypeptide reads, in one-letter code: Regulator of G-protein signaling 3 (966 aa).

The 78-residue stretch at 18–95 (QITIRRGKDG…EIILLVWRVV (78 aa)) folds into the PDZ domain. Positions 115-135 (THDLLSPPNKREKNCTHGAPV) are disordered. Arg-167 is modified (omega-N-methylarginine). Disordered stretches follow at residues 403-618 (EADE…TGAV) and 637-704 (YSQL…RVQN). 2 stretches are compositionally biased toward polar residues: residues 527–548 (PETS…TELP) and 576–594 (SSAS…SSLG). The span at 649 to 675 (GEDEDAEEGEEGGEGEEDEEDDTSDDN) shows a compositional bias: acidic residues. The segment covering 676 to 686 (YGDRSEAKRSS) has biased composition (basic and acidic residues). A phosphoserine mark is found at Ser-712, Ser-715, Ser-747, and Ser-776. Positions 806-830 (FRRRNESPGAQPASKTDKTTKSFKP) are disordered. Residues 820-830 (KTDKTTKSFKP) are compositionally biased toward basic and acidic residues. The region spanning 841–966 (SLEKLLLHKY…INQKKMSPPL (126 aa)) is the RGS domain.

Binds the GNB1-GNG2 heterodimer. Binds EFNB1 and EFNB2. In terms of processing, phosphorylated by cyclic GMP-dependent protein kinase. Post-translationally, ISGylated. In terms of tissue distribution, detected in embryos from E8.5-16.5 in cortical ventricular zone, dorsal root ganglia and cerebellar primordia. Isoform 3 is detected in testis and in spermatocytes from newborn mice. Levels increase and reach a maximum after 21 days; after this they decrease again. Long isoforms are widely expressed.

Its subcellular location is the cytoplasm. The protein resides in the cell membrane. It is found in the nucleus. Functionally, down-regulates signaling from heterotrimeric G-proteins by increasing the GTPase activity of the alpha subunits, thereby driving them into their inactive GDP-bound form. Down-regulates G-protein-mediated release of inositol phosphates and activation of MAP kinases. The polypeptide is Regulator of G-protein signaling 3 (Rgs3) (Mus musculus (Mouse)).